An 82-amino-acid polypeptide reads, in one-letter code: Envelope small membrane protein (82 aa).

Residues 1–16 (MLPFVHEQIGTIIVNF) are Virion surface-facing. A helical membrane pass occupies residues 17–37 (FILTVVCAITLLVCLAVLTAI). Over 38–78 (RLCVQCASGVNTLLFVPAFYIYNTGRNAYFKFQENRPPFPP) the chain is Intravirion.

The protein belongs to the betacoronaviruses E protein family. As to quaternary structure, homopentamer. Interacts with membrane protein M in the budding compartment of the host cell, which is located between endoplasmic reticulum and the Golgi complex. Interacts with Nucleoprotein.

The protein localises to the host Golgi apparatus membrane. Plays a central role in virus morphogenesis and assembly. Acts as a viroporin and self-assembles in host membranes forming pentameric protein-lipid pores that allow ion transport. Also plays a role in the induction of apoptosis. In Tylonycteris pachypus (Lesser bamboo bat), this protein is Envelope small membrane protein.